A 338-amino-acid polypeptide reads, in one-letter code: Alanine racemase (338 aa).

Lys-33 functions as the Proton acceptor; specific for D-alanine in the catalytic mechanism. An N6-(pyridoxal phosphate)lysine modification is found at Lys-33. Residue Arg-126 participates in substrate binding. Tyr-236 acts as the Proton acceptor; specific for L-alanine in catalysis. Substrate is bound at residue Met-284.

It belongs to the alanine racemase family. Pyridoxal 5'-phosphate is required as a cofactor.

The enzyme catalyses L-alanine = D-alanine. It participates in amino-acid biosynthesis; D-alanine biosynthesis; D-alanine from L-alanine: step 1/1. Its function is as follows. Catalyzes the interconversion of L-alanine and D-alanine. May also act on other amino acids. In Aquifex aeolicus (strain VF5), this protein is Alanine racemase (alr).